The chain runs to 259 residues: Phosphonates import ATP-binding protein PhnC (259 aa).

The region spanning 4–245 (ISIQSVTKRF…ALRTIYQREG (242 aa)) is the ABC transporter domain. ATP is bound at residue 37 to 44 (GPSGAGKS).

The protein belongs to the ABC transporter superfamily. Phosphonates importer (TC 3.A.1.9.1) family. As to quaternary structure, the complex is composed of two ATP-binding proteins (PhnC), two transmembrane proteins (PhnE) and a solute-binding protein (PhnD).

Its subcellular location is the cell inner membrane. It catalyses the reaction phosphonate(out) + ATP + H2O = phosphonate(in) + ADP + phosphate + H(+). In terms of biological role, part of the ABC transporter complex PhnCDE involved in phosphonates import. Responsible for energy coupling to the transport system. In Thiobacillus denitrificans (strain ATCC 25259 / T1), this protein is Phosphonates import ATP-binding protein PhnC.